Reading from the N-terminus, the 217-residue chain is 3-demethoxyubiquinol 3-hydroxylase (217 aa).

The Fe cation site is built by Glu66, Glu96, His99, Glu148, Glu180, and His183.

It belongs to the COQ7 family. Requires Fe cation as cofactor.

It localises to the cell membrane. It catalyses the reaction a 5-methoxy-2-methyl-3-(all-trans-polyprenyl)benzene-1,4-diol + AH2 + O2 = a 3-demethylubiquinol + A + H2O. It participates in cofactor biosynthesis; ubiquinone biosynthesis. Catalyzes the hydroxylation of 2-nonaprenyl-3-methyl-6-methoxy-1,4-benzoquinol during ubiquinone biosynthesis. The polypeptide is 3-demethoxyubiquinol 3-hydroxylase (Xanthomonas euvesicatoria pv. vesicatoria (strain 85-10) (Xanthomonas campestris pv. vesicatoria)).